Reading from the N-terminus, the 149-residue chain is uncharacterized protein (149 aa).

A Phosphoserine modification is found at S21. The next 2 helical transmembrane spans lie at 48–68 and 72–92; these read FMEF…WVLG and VLAA…FQLV. The segment at 116 to 149 is disordered; the sequence is AEEVPPPSYPSLEEENEGNEEIEESEEMNTLLSK. Over residues 127–142 the composition is skewed to acidic residues; it reads LEEENEGNEEIEESEE.

The protein resides in the membrane. This is an uncharacterized protein from Schizosaccharomyces pombe (strain 972 / ATCC 24843) (Fission yeast).